The primary structure comprises 94 residues: DNA-directed RNA polymerase subunit omega (94 aa).

This sequence belongs to the RNA polymerase subunit omega family. The RNAP catalytic core consists of 2 alpha, 1 beta, 1 beta' and 1 omega subunit. When a sigma factor is associated with the core the holoenzyme is formed, which can initiate transcription.

The catalysed reaction is RNA(n) + a ribonucleoside 5'-triphosphate = RNA(n+1) + diphosphate. Functionally, promotes RNA polymerase assembly. Latches the N- and C-terminal regions of the beta' subunit thereby facilitating its interaction with the beta and alpha subunits. The sequence is that of DNA-directed RNA polymerase subunit omega from Tolumonas auensis (strain DSM 9187 / NBRC 110442 / TA 4).